The primary structure comprises 373 residues: Glutamate 5-kinase 2 (373 aa).

Lys-11 provides a ligand contact to ATP. Substrate contacts are provided by Ser-51, Asp-138, and Asn-150. ATP-binding positions include 170–171 (SD) and 212–218 (TGGMKSK). One can recognise a PUA domain in the interval 279–355 (EGDIVVHNES…TNQETAASSQ (77 aa)).

This sequence belongs to the glutamate 5-kinase family.

Its subcellular location is the cytoplasm. It carries out the reaction L-glutamate + ATP = L-glutamyl 5-phosphate + ADP. It participates in amino-acid biosynthesis; L-proline biosynthesis; L-glutamate 5-semialdehyde from L-glutamate: step 1/2. Functionally, catalyzes the transfer of a phosphate group to glutamate to form L-glutamate 5-phosphate. This is Glutamate 5-kinase 2 from Bacillus licheniformis (strain ATCC 14580 / DSM 13 / JCM 2505 / CCUG 7422 / NBRC 12200 / NCIMB 9375 / NCTC 10341 / NRRL NRS-1264 / Gibson 46).